The chain runs to 124 residues: Small ribosomal subunit protein uS12 (124 aa).

The residue at position 90 (aspartate 90) is a 3-methylthioaspartic acid.

Belongs to the universal ribosomal protein uS12 family. As to quaternary structure, part of the 30S ribosomal subunit. Contacts proteins S8 and S17. May interact with IF1 in the 30S initiation complex.

Its function is as follows. With S4 and S5 plays an important role in translational accuracy. Interacts with and stabilizes bases of the 16S rRNA that are involved in tRNA selection in the A site and with the mRNA backbone. Located at the interface of the 30S and 50S subunits, it traverses the body of the 30S subunit contacting proteins on the other side and probably holding the rRNA structure together. The combined cluster of proteins S8, S12 and S17 appears to hold together the shoulder and platform of the 30S subunit. The chain is Small ribosomal subunit protein uS12 from Wolbachia sp. subsp. Drosophila simulans (strain wRi).